A 162-amino-acid chain; its full sequence is Peptidyl-prolyl cis-trans isomerase-like 1 (162 aa).

One can recognise a PPIase cyclophilin-type domain in the interval 1 to 155; the sequence is MATDVTFDTS…DEVKILRAKV (155 aa).

The protein belongs to the cyclophilin-type PPIase family. PPIL1 subfamily.

The catalysed reaction is [protein]-peptidylproline (omega=180) = [protein]-peptidylproline (omega=0). PPIases accelerate the folding of proteins. It catalyzes the cis-trans isomerization of proline imidic peptide bonds in oligopeptides. This Emericella nidulans (strain FGSC A4 / ATCC 38163 / CBS 112.46 / NRRL 194 / M139) (Aspergillus nidulans) protein is Peptidyl-prolyl cis-trans isomerase-like 1 (cyp1).